The chain runs to 335 residues: Transcription factor IIIA (335 aa).

C2H2-type zinc fingers lie at residues tyrosine 13–histidine 37, phenylalanine 43–histidine 67, cysteine 73–histidine 98, tyrosine 105–histidine 129, phenylalanine 135–histidine 159, tyrosine 162–histidine 188, threonine 192–histidine 214, tyrosine 221–histidine 246, and phenylalanine 252–histidine 276. The segment covering leucine 269–lysine 280 has biased composition (basic and acidic residues). A disordered region spans residues leucine 269–lysine 335. A compositionally biased stretch (basic residues) spans lysine 281–leucine 292.

It is found in the nucleus. In terms of biological role, involved in ribosomal large subunit biogenesis. Interacts with the internal control region (ICR) of approximately 50 bases within the 5S RNA genes, is required for correct transcription of these genes by RNA polymerase III. Also binds the transcribed 5S RNA's. The polypeptide is Transcription factor IIIA (gtf3a) (Lithobates pipiens (Northern leopard frog)).